Reading from the N-terminus, the 154-residue chain is Cysteine-rich DPF motif domain-containing protein 1 (154 aa).

Belongs to the CDPF1 family.

The chain is Cysteine-rich DPF motif domain-containing protein 1 from Drosophila melanogaster (Fruit fly).